The primary structure comprises 883 residues: Valine--tRNA ligase (883 aa).

The 'HIGH' region motif lies at 46-56; sequence PNVTGKLHLGH. The short motif at 520 to 524 is the 'KMSKS' region element; that stretch reads KMSKS. An ATP-binding site is contributed by Lys-523. The stretch at 809–844 forms a coiled coil; sequence LADLLNVEEELARLEKELAKWQKELDMVGKKLSNER.

The protein belongs to the class-I aminoacyl-tRNA synthetase family. ValS type 1 subfamily. As to quaternary structure, monomer.

It localises to the cytoplasm. It catalyses the reaction tRNA(Val) + L-valine + ATP = L-valyl-tRNA(Val) + AMP + diphosphate. Catalyzes the attachment of valine to tRNA(Val). As ValRS can inadvertently accommodate and process structurally similar amino acids such as threonine, to avoid such errors, it has a 'posttransfer' editing activity that hydrolyzes mischarged Thr-tRNA(Val) in a tRNA-dependent manner. The sequence is that of Valine--tRNA ligase from Streptococcus thermophilus (strain CNRZ 1066).